A 110-amino-acid chain; its full sequence is MAKINLTPKKIYEQEFKTSIRGYDKTEVDEFLDDVIKDYTVYIALVKELQEENAKLKAKATSAPASRPAYASATSEPSHATTNIASASNYDILKRISRLEKEVFGKQIVE.

Residues 37 to 63 (KDYTVYIALVKELQEENAKLKAKATSA) adopt a coiled-coil conformation. Residues 59 to 79 (KATSAPASRPAYASATSEPSH) form a disordered region. Residues 60 to 75 (ATSAPASRPAYASATS) show a composition bias toward low complexity.

This sequence belongs to the GpsB family. Forms polymers through the coiled coil domains. Interacts with PBP1, MreC and EzrA.

It localises to the cytoplasm. Its function is as follows. Divisome component that associates with the complex late in its assembly, after the Z-ring is formed, and is dependent on DivIC and PBP2B for its recruitment to the divisome. Together with EzrA, is a key component of the system that regulates PBP1 localization during cell cycle progression. Its main role could be the removal of PBP1 from the cell pole after pole maturation is completed. Also contributes to the recruitment of PBP1 to the division complex. Not essential for septum formation. This is Cell cycle protein GpsB from Streptococcus thermophilus (strain CNRZ 1066).